We begin with the raw amino-acid sequence, 237 residues long: Phosphoribosylaminoimidazole-succinocarboxamide synthase (237 aa).

It belongs to the SAICAR synthetase family.

The enzyme catalyses 5-amino-1-(5-phospho-D-ribosyl)imidazole-4-carboxylate + L-aspartate + ATP = (2S)-2-[5-amino-1-(5-phospho-beta-D-ribosyl)imidazole-4-carboxamido]succinate + ADP + phosphate + 2 H(+). Its pathway is purine metabolism; IMP biosynthesis via de novo pathway; 5-amino-1-(5-phospho-D-ribosyl)imidazole-4-carboxamide from 5-amino-1-(5-phospho-D-ribosyl)imidazole-4-carboxylate: step 1/2. This chain is Phosphoribosylaminoimidazole-succinocarboxamide synthase, found in Escherichia coli O7:K1 (strain IAI39 / ExPEC).